The sequence spans 119 residues: Nucleoid-associated protein Cphy_0047 (119 aa).

Positions 23 to 45 are disordered; it reads AQRMQKQMEDKTKEMEEKQWEAT. Positions 28–42 are enriched in basic and acidic residues; that stretch reads KQMEDKTKEMEEKQW.

The protein belongs to the YbaB/EbfC family. As to quaternary structure, homodimer.

It localises to the cytoplasm. It is found in the nucleoid. In terms of biological role, binds to DNA and alters its conformation. May be involved in regulation of gene expression, nucleoid organization and DNA protection. In Lachnoclostridium phytofermentans (strain ATCC 700394 / DSM 18823 / ISDg) (Clostridium phytofermentans), this protein is Nucleoid-associated protein Cphy_0047.